Reading from the N-terminus, the 622-residue chain is WD repeat-containing protein 46 (622 aa).

The disordered stretch occupies residues 1-135 (METAPKPGRG…KTQSKLEKAE (135 aa)). Phosphoserine is present on serine 41. Basic and acidic residues predominate over residues 106–118 (EEARKFCRIDKSK). WD repeat units follow at residues 192 to 233 (LRQF…CEIN), 234 to 271 (VMEA…LHCI), 314 to 353 (VRAG…PLAK), 356 to 395 (CHRG…QPLS), and 398 to 435 (TLPQ…SPPS). Residues 547 to 622 (AAFQPKAKQK…AREGGLQVDP (76 aa)) form a disordered region. The segment covering 571-582 (VMDQEHRDKVRQ) has biased composition (basic and acidic residues).

As to quaternary structure, part of the small subunit (SSU) processome, composed of more than 70 proteins and the RNA chaperone small nucleolar RNA (snoRNA) U3. Interacts with DDX21, NCL, NOP2 and EBNA1BP2.

Its subcellular location is the nucleus. The protein localises to the nucleolus. In terms of biological role, scaffold component of the nucleolar structure. Required for localization of DDX21 and NCL to the granular compartment of the nucleolus. Part of the small subunit (SSU) processome, first precursor of the small eukaryotic ribosomal subunit. During the assembly of the SSU processome in the nucleolus, many ribosome biogenesis factors, an RNA chaperone and ribosomal proteins associate with the nascent pre-rRNA and work in concert to generate RNA folding, modifications, rearrangements and cleavage as well as targeted degradation of pre-ribosomal RNA by the RNA exosome. This chain is WD repeat-containing protein 46 (Wdr46), found in Mus musculus (Mouse).